Consider the following 92-residue polypeptide: YcgL domain-containing protein Sputcn32_1766 (92 aa).

One can recognise a YcgL domain in the interval 1–85 (MLCTVYKSTR…PQVNLLAEHK (85 aa)).

This is YcgL domain-containing protein Sputcn32_1766 from Shewanella putrefaciens (strain CN-32 / ATCC BAA-453).